A 275-amino-acid polypeptide reads, in one-letter code: Rhamnulose-1-phosphate aldolase (275 aa).

Residue Glu117 is part of the active site. Residues His141, His143, and His212 each coordinate Zn(2+).

Belongs to the aldolase class II family. RhaD subfamily. In terms of assembly, homotetramer. Zn(2+) serves as cofactor.

The protein resides in the cytoplasm. The catalysed reaction is L-rhamnulose 1-phosphate = (S)-lactaldehyde + dihydroxyacetone phosphate. Its pathway is carbohydrate degradation; L-rhamnose degradation; glycerone phosphate from L-rhamnose: step 3/3. In terms of biological role, catalyzes the reversible cleavage of L-rhamnulose-1-phosphate to dihydroxyacetone phosphate (DHAP) and L-lactaldehyde. The chain is Rhamnulose-1-phosphate aldolase from Salmonella choleraesuis (strain SC-B67).